Reading from the N-terminus, the 1405-residue chain is DNA-directed RNA polymerase subunit beta' (1405 aa).

Zn(2+) is bound by residues C71, C73, C86, and C89. Mg(2+) is bound by residues D462, D464, and D466. Positions 820, 893, 900, and 903 each coordinate Zn(2+).

This sequence belongs to the RNA polymerase beta' chain family. The RNAP catalytic core consists of 2 alpha, 1 beta, 1 beta' and 1 omega subunit. When a sigma factor is associated with the core the holoenzyme is formed, which can initiate transcription. Requires Mg(2+) as cofactor. Zn(2+) serves as cofactor.

The catalysed reaction is RNA(n) + a ribonucleoside 5'-triphosphate = RNA(n+1) + diphosphate. Functionally, DNA-dependent RNA polymerase catalyzes the transcription of DNA into RNA using the four ribonucleoside triphosphates as substrates. This Methylorubrum populi (strain ATCC BAA-705 / NCIMB 13946 / BJ001) (Methylobacterium populi) protein is DNA-directed RNA polymerase subunit beta'.